The sequence spans 427 residues: Ribitol transporter (427 aa).

The Cytoplasmic portion of the chain corresponds to 1–7 (MSVNNKQ). A helical transmembrane segment spans residues 8-28 (WYGLPLNLIWGYVAIAVFMTG). The Extracellular segment spans residues 29–51 (DGFELAFLSHYIKALGFTPAQAS). Residues 52 to 72 (FAFTLYGLAAALSAWVSGVVA) form a helical membrane-spanning segment. Over 73–79 (EIITPRK) the chain is Cytoplasmic. Residues 80–100 (AMLIGFVLWCVFHVLFLVFGL) form a helical membrane-spanning segment. Over 101–107 (GRANYAL) the chain is Extracellular. Residues 108–128 (ILLFYGIRGLAYPLFLYSFIV) form a helical membrane-spanning segment. The Cytoplasmic portion of the chain corresponds to 129–141 (AIIHNVRSDSSSS). Residues 142 to 162 (ALGWFWAVYSVGIGVFGSYIP) form a helical membrane-spanning segment. The Extracellular portion of the chain corresponds to 163–171 (SFTIPHIGE). A helical membrane pass occupies residues 172 to 192 (MGTLWLALLFCATGGIIALVS). Topologically, residues 193–238 (MRHTETPRHMQNLTTREKFAELGRAATLLYTNRSILFSSIVRIINT) are cytoplasmic. A helical transmembrane segment spans residues 239–259 (LSLFGFAVIMPMMFVDELGFT). Residues 260–263 (TSEW) lie on the Extracellular side of the membrane. The helical transmembrane segment at 264–284 (LQVWAAFFFTTIFSNVFWGIV) threads the bilayer. Residues 285–295 (AEKMGWMKVIR) lie on the Cytoplasmic side of the membrane. A helical membrane pass occupies residues 296 to 316 (WFGCIGMALSSLAFYYLPQHF). Over 317–323 (GHNFAMA) the chain is Extracellular. The chain crosses the membrane as a helical span at residues 324-344 (LVPAIALGIFVAAFVPMAAVF). At 345–360 (PALEPNHKGAAISVYN) the chain is on the cytoplasmic side. A helical membrane pass occupies residues 361–381 (LSAGLSNFLAPAIAVVLLPYF). The Extracellular segment spans residues 382-383 (ST). Residues 384–404 (IGVVIAYTALYILAFFLCPLI) traverse the membrane as a helical segment. The Cytoplasmic segment spans residues 405–427 (RVEQPGFTSDQHAKPFTANAAES).

Belongs to the major facilitator superfamily. Sugar transporter (TC 2.A.1.1) family. CsbX subfamily.

It localises to the cell membrane. This Klebsiella pneumoniae protein is Ribitol transporter (rbtT).